Reading from the N-terminus, the 149-residue chain is Transcriptional repressor NrdR (149 aa).

A zinc finger lies at cysteine 3 to cysteine 34. The ATP-cone domain occupies proline 49–glutamate 139.

It belongs to the NrdR family. The cofactor is Zn(2+).

In terms of biological role, negatively regulates transcription of bacterial ribonucleotide reductase nrd genes and operons by binding to NrdR-boxes. This Shigella flexneri protein is Transcriptional repressor NrdR.